A 355-amino-acid polypeptide reads, in one-letter code: Peptide chain release factor 1 (355 aa).

N5-methylglutamine is present on Q233.

Belongs to the prokaryotic/mitochondrial release factor family. Post-translationally, methylated by PrmC. Methylation increases the termination efficiency of RF1.

Its subcellular location is the cytoplasm. In terms of biological role, peptide chain release factor 1 directs the termination of translation in response to the peptide chain termination codons UAG and UAA. The polypeptide is Peptide chain release factor 1 (Syntrophomonas wolfei subsp. wolfei (strain DSM 2245B / Goettingen)).